A 287-amino-acid chain; its full sequence is 2-dehydro-3-deoxyphosphooctonate aldolase (287 aa).

The protein belongs to the KdsA family.

The protein localises to the cytoplasm. It carries out the reaction D-arabinose 5-phosphate + phosphoenolpyruvate + H2O = 3-deoxy-alpha-D-manno-2-octulosonate-8-phosphate + phosphate. It functions in the pathway carbohydrate biosynthesis; 3-deoxy-D-manno-octulosonate biosynthesis; 3-deoxy-D-manno-octulosonate from D-ribulose 5-phosphate: step 2/3. Its pathway is bacterial outer membrane biogenesis; lipopolysaccharide biosynthesis. This is 2-dehydro-3-deoxyphosphooctonate aldolase from Rhodopseudomonas palustris (strain ATCC BAA-98 / CGA009).